A 333-amino-acid polypeptide reads, in one-letter code: Tetraacyldisaccharide 4'-kinase (333 aa).

Residue 55–62 (TAGGNGKT) coordinates ATP.

This sequence belongs to the LpxK family.

It carries out the reaction a lipid A disaccharide + ATP = a lipid IVA + ADP + H(+). The protein operates within glycolipid biosynthesis; lipid IV(A) biosynthesis; lipid IV(A) from (3R)-3-hydroxytetradecanoyl-[acyl-carrier-protein] and UDP-N-acetyl-alpha-D-glucosamine: step 6/6. Functionally, transfers the gamma-phosphate of ATP to the 4'-position of a tetraacyldisaccharide 1-phosphate intermediate (termed DS-1-P) to form tetraacyldisaccharide 1,4'-bis-phosphate (lipid IVA). The protein is Tetraacyldisaccharide 4'-kinase of Pectobacterium carotovorum subsp. carotovorum (strain PC1).